A 331-amino-acid chain; its full sequence is Tetraspanin-10 (331 aa).

The segment at 1-34 (MKEEECSPLLSQDTAGREHPLTRNSPPTANIPCP) is disordered. At 1 to 76 (MKEEECSPLL…LSTGSNCVKY (76 aa)) the chain is on the cytoplasmic side. The chain crosses the membrane as a helical span at residues 77 to 97 (LIFLSNFLFSLPSLLALAAGL). The Extracellular segment spans residues 98 to 120 (WGLTVKRSQGIGWGGPVPTDPML). A helical transmembrane segment spans residues 121-141 (MLVLGGLVVSVVSLSGCLGAF). The Cytoplasmic portion of the chain corresponds to 142 to 152 (CENSCLLHWYC). A helical membrane pass occupies residues 153–173 (GAVLFCLALEALAGVLMVTLW). Topologically, residues 174–331 (KPLQDSLKYT…AAEDIEAGPL (158 aa)) are extracellular. Cystine bridges form between cysteine 210–cysteine 277, cysteine 211–cysteine 241, cysteine 227–cysteine 235, and cysteine 242–cysteine 256. N-linked (GlcNAc...) asparagine glycosylation occurs at asparagine 226.

Belongs to the tetraspanin (TM4SF) family. In terms of assembly, interacts with ADAM10.

It localises to the cell membrane. In terms of biological role, part of TspanC8 subgroup, composed of 6 members that interact with the transmembrane metalloprotease ADAM10. This interaction is required for ADAM10 exit from the endoplasmic reticulum and for enzymatic maturation and trafficking to the cell surface as well as substrate specificity. Different TspanC8/ADAM10 complexes have distinct substrates. This chain is Tetraspanin-10 (Tspan10), found in Mus musculus (Mouse).